The primary structure comprises 215 residues: ATP-dependent Clp protease proteolytic subunit 1 (215 aa).

The active-site Nucleophile is S111. The active site involves H136.

Belongs to the peptidase S14 family. As to quaternary structure, fourteen ClpP subunits assemble into 2 heptameric rings which stack back to back to give a disk-like structure with a central cavity, resembling the structure of eukaryotic proteasomes.

It is found in the cytoplasm. It carries out the reaction Hydrolysis of proteins to small peptides in the presence of ATP and magnesium. alpha-casein is the usual test substrate. In the absence of ATP, only oligopeptides shorter than five residues are hydrolyzed (such as succinyl-Leu-Tyr-|-NHMec, and Leu-Tyr-Leu-|-Tyr-Trp, in which cleavage of the -Tyr-|-Leu- and -Tyr-|-Trp bonds also occurs).. Its function is as follows. Cleaves peptides in various proteins in a process that requires ATP hydrolysis. Has a chymotrypsin-like activity. Plays a major role in the degradation of misfolded proteins. The chain is ATP-dependent Clp protease proteolytic subunit 1 from Gluconobacter oxydans (strain 621H) (Gluconobacter suboxydans).